A 745-amino-acid polypeptide reads, in one-letter code: Kinesin-like protein KIN-14M (745 aa).

The disordered stretch occupies residues 1–31 (MVGEMTNNGRIRPSFPVKDLTSNEGSEYGGP). Residues 1-35 (MVGEMTNNGRIRPSFPVKDLTSNEGSEYGGPVEFT) form a globular region. Microtubule-binding stretches follow at residues 65-77 (YVKRLRLCIRWFQ) and 198-745 (SLQL…LSLG). 2 coiled-coil regions span residues 76–223 (FQEL…GEKE) and 259–389 (KDEL…GNIR). A Kinesin motor domain is found at 387-724 (NIRVFCRVRP…LRFAARVNAC (338 aa)). 472–479 (GQTGSGKT) contributes to the ATP binding site.

Belongs to the TRAFAC class myosin-kinesin ATPase superfamily. Kinesin family. KIN-14 subfamily. As to quaternary structure, bind to microtubules in an ATP-insensitive manner (in vitro). Homodimer and heterodimer with KIN14N/KATC (in vitro).

The protein resides in the cytoplasm. It localises to the cytoskeleton. The protein is Kinesin-like protein KIN-14M of Arabidopsis thaliana (Mouse-ear cress).